A 517-amino-acid chain; its full sequence is T-complex protein 11-like protein 2 (517 aa).

A disordered region spans residues 1–59 (MPFNGEKQCVSEDQQSDSESSRFAEGVASLSDYECSRQSFTSDSSSKSSSPASTSPPRG). At Ser-16 the chain carries Phosphoserine. Low complexity predominate over residues 36–55 (SRQSFTSDSSSKSSSPASTS).

This sequence belongs to the TCP11 family. In terms of assembly, interacts with FMNL2; this interaction promotes muscle-derived satellite cell (MDSC) migration and differentiation.

The protein localises to the cytoplasm. The protein resides in the cytoskeleton. Its function is as follows. Promotes the migration of muscle-derived satellite cells (MDSCs) during differentiation throught interaction with FMNL2 and therefore may participate in microfilament assembly. In Mus musculus (Mouse), this protein is T-complex protein 11-like protein 2.